Consider the following 74-residue polypeptide: Small ribosomal subunit protein uS15 (74 aa).

This sequence belongs to the universal ribosomal protein uS15 family. As to quaternary structure, part of the 30S ribosomal subunit. Forms a bridge to the 50S subunit in the 70S ribosome, contacting the 23S rRNA.

Its function is as follows. One of the primary rRNA binding proteins, it binds directly to 16S rRNA where it helps nucleate assembly of the platform of the 30S subunit by binding and bridging several RNA helices of the 16S rRNA. In terms of biological role, forms an intersubunit bridge (bridge B4) with the 23S rRNA of the 50S subunit in the ribosome. The polypeptide is Small ribosomal subunit protein uS15 (Aster yellows witches'-broom phytoplasma (strain AYWB)).